The chain runs to 186 residues: Protein Syd (186 aa).

The protein belongs to the Syd family.

The protein resides in the cell inner membrane. In terms of biological role, interacts with the SecY protein in vivo. May bind preferentially to an uncomplexed state of SecY, thus functioning either as a chelating agent for excess SecY in the cell or as a regulatory factor that negatively controls the translocase function. The sequence is that of Protein Syd from Pseudoalteromonas atlantica (strain T6c / ATCC BAA-1087).